Here is a 71-residue protein sequence, read N- to C-terminus: Light-harvesting protein B-800/850 alpha chain (71 aa).

The Cytoplasmic portion of the chain corresponds to 1–15 (MNQGKVWRVVKPTVG). The helical transmembrane segment at 16 to 36 (VPVYLGAVAVTALILHGGLLA) threads the bilayer. Residue histidine 31 participates in a bacteriochlorophyll binding. Over 37–50 (KTDWFGAYWNGGKK) the chain is Periplasmic. The helical transmembrane segment at 51 to 71 (AAAAAAAVAPAPVAAPQAPAQ) threads the bilayer.

Belongs to the antenna complex alpha subunit family. An alpha/beta heterodimer conjugated to 3 bacteriochlorophyll molecules. The core complex is formed by different alpha and beta chains, binding bacteriochlorophyll molecules, and arranged most probably in tetrameric structures disposed around the reaction center. The non-pigmented gamma chains may constitute additional components.

Its subcellular location is the cell membrane. Functionally, antenna complexes are light-harvesting systems, which transfer the excitation energy to the reaction centers. The polypeptide is Light-harvesting protein B-800/850 alpha chain (pucA) (Rubrivivax gelatinosus (Rhodocyclus gelatinosus)).